Consider the following 336-residue polypeptide: Pyridoxal 5'-phosphate synthase subunit PdxS (336 aa).

Position 62 (aspartate 62) interacts with D-ribose 5-phosphate. The active-site Schiff-base intermediate with D-ribose 5-phosphate is the lysine 119. D-ribose 5-phosphate is bound at residue glycine 191. A D-glyceraldehyde 3-phosphate-binding site is contributed by lysine 203. D-ribose 5-phosphate is bound by residues glycine 254 and 275–276; that span reads GS.

It belongs to the PdxS/SNZ family. In terms of assembly, in the presence of PdxT, forms a dodecamer of heterodimers.

It catalyses the reaction aldehydo-D-ribose 5-phosphate + D-glyceraldehyde 3-phosphate + L-glutamine = pyridoxal 5'-phosphate + L-glutamate + phosphate + 3 H2O + H(+). The protein operates within cofactor biosynthesis; pyridoxal 5'-phosphate biosynthesis. In terms of biological role, catalyzes the formation of pyridoxal 5'-phosphate from ribose 5-phosphate (RBP), glyceraldehyde 3-phosphate (G3P) and ammonia. The ammonia is provided by the PdxT subunit. Can also use ribulose 5-phosphate and dihydroxyacetone phosphate as substrates, resulting from enzyme-catalyzed isomerization of RBP and G3P, respectively. The protein is Pyridoxal 5'-phosphate synthase subunit PdxS of Pyrobaculum calidifontis (strain DSM 21063 / JCM 11548 / VA1).